The chain runs to 240 residues: Biosynthetic peptidoglycan transglycosylase (240 aa).

Residues 15–35 (WMVYLGAVVAIAWLATQAFYF) form a helical membrane-spanning segment.

The protein belongs to the glycosyltransferase 51 family.

It localises to the cell inner membrane. The enzyme catalyses [GlcNAc-(1-&gt;4)-Mur2Ac(oyl-L-Ala-gamma-D-Glu-L-Lys-D-Ala-D-Ala)](n)-di-trans,octa-cis-undecaprenyl diphosphate + beta-D-GlcNAc-(1-&gt;4)-Mur2Ac(oyl-L-Ala-gamma-D-Glu-L-Lys-D-Ala-D-Ala)-di-trans,octa-cis-undecaprenyl diphosphate = [GlcNAc-(1-&gt;4)-Mur2Ac(oyl-L-Ala-gamma-D-Glu-L-Lys-D-Ala-D-Ala)](n+1)-di-trans,octa-cis-undecaprenyl diphosphate + di-trans,octa-cis-undecaprenyl diphosphate + H(+). Its pathway is cell wall biogenesis; peptidoglycan biosynthesis. Peptidoglycan polymerase that catalyzes glycan chain elongation from lipid-linked precursors. The sequence is that of Biosynthetic peptidoglycan transglycosylase from Paraburkholderia phytofirmans (strain DSM 17436 / LMG 22146 / PsJN) (Burkholderia phytofirmans).